A 423-amino-acid chain; its full sequence is L-cysteine:1D-myo-inositol 2-amino-2-deoxy-alpha-D-glucopyranoside ligase (423 aa).

Cysteine 43 provides a ligand contact to Zn(2+). L-cysteinyl-5'-AMP contacts are provided by residues 43-46 (CGIT), threonine 58, and 81-83 (NVT). Residues 45 to 55 (ITPYDATHMGH) carry the 'HIGH' region motif. The short motif at 199 to 204 (ERGGDP) is the 'ERGGDP' region element. Tryptophan 240 contacts L-cysteinyl-5'-AMP. Cysteine 244 lines the Zn(2+) pocket. 262-264 (GSD) provides a ligand contact to L-cysteinyl-5'-AMP. Histidine 269 is a binding site for Zn(2+). Valine 295 serves as a coordination point for L-cysteinyl-5'-AMP. The 'KMSKS' region signature appears at 301–305 (KMSKS).

The protein belongs to the class-I aminoacyl-tRNA synthetase family. MshC subfamily. As to quaternary structure, monomer. It depends on Zn(2+) as a cofactor.

It catalyses the reaction 1D-myo-inositol 2-amino-2-deoxy-alpha-D-glucopyranoside + L-cysteine + ATP = 1D-myo-inositol 2-(L-cysteinylamino)-2-deoxy-alpha-D-glucopyranoside + AMP + diphosphate + H(+). Its function is as follows. Catalyzes the ATP-dependent condensation of GlcN-Ins and L-cysteine to form L-Cys-GlcN-Ins. The chain is L-cysteine:1D-myo-inositol 2-amino-2-deoxy-alpha-D-glucopyranoside ligase from Renibacterium salmoninarum (strain ATCC 33209 / DSM 20767 / JCM 11484 / NBRC 15589 / NCIMB 2235).